The chain runs to 276 residues: Rhomboid protease GlpG (276 aa).

A run of 6 helical transmembrane segments spans residues 94–114, 142–162, 169–189, 192–212, 229–249, and 250–270; these read GPVT…MQIL, ALMH…WYLG, LGSG…GYVQ, FSGP…GYVW, LIIF…GMSM, and ANGA…VDSL. Ser201 serves as the catalytic Nucleophile. His254 is an active-site residue.

It belongs to the peptidase S54 family.

The protein localises to the cell inner membrane. The enzyme catalyses Cleaves type-1 transmembrane domains using a catalytic dyad composed of serine and histidine that are contributed by different transmembrane domains.. Functionally, rhomboid-type serine protease that catalyzes intramembrane proteolysis. The polypeptide is Rhomboid protease GlpG (Shigella flexneri serotype 5b (strain 8401)).